We begin with the raw amino-acid sequence, 526 residues long: mRNA export factor ICP27 homolog (526 aa).

Zn(2+) is bound by residues Cys-239, His-344, Cys-346, and Cys-351. The segment at 239–351 (CVFNDNGHGD…NNHQCDDIGC (113 aa)) adopts a CHC2-type zinc-finger fold.

Belongs to the HHV-1 ICP27 protein family.

The protein localises to the virion tegument. Its subcellular location is the virion. It is found in the host nucleus. It localises to the host cytoplasm. Functionally, immediate early (EI) protein that plays many roles during productive infection including regulation of viral gene expression and nuclear export of intronless viral RNAs. This chain is mRNA export factor ICP27 homolog, found in Human herpesvirus 7 (strain JI) (HHV-7).